The chain runs to 207 residues: Riboflavin synthase (207 aa).

Lumazine-binding repeat units lie at residues 1–94 (MFTG…LGGH) and 95–191 (IVQG…INYL). 2,4-dihydroxypteridine is bound by residues 4 to 6 (GLV), 45 to 47 (CLT), 59 to 64 (DVSPET), 98 to 100 (GHV), Lys-133, 142 to 144 (SLT), and 156 to 161 (NIIPHT).

As to quaternary structure, homotrimer.

The catalysed reaction is 2 6,7-dimethyl-8-(1-D-ribityl)lumazine + H(+) = 5-amino-6-(D-ribitylamino)uracil + riboflavin. It functions in the pathway cofactor biosynthesis; riboflavin biosynthesis; riboflavin from 2-hydroxy-3-oxobutyl phosphate and 5-amino-6-(D-ribitylamino)uracil: step 2/2. Functionally, catalyzes the dismutation of two molecules of 6,7-dimethyl-8-ribityllumazine, resulting in the formation of riboflavin and 5-amino-6-(D-ribitylamino)uracil. The sequence is that of Riboflavin synthase (ribE) from Aquifex aeolicus (strain VF5).